Consider the following 436-residue polypeptide: Histidine--tRNA ligase (436 aa).

This sequence belongs to the class-II aminoacyl-tRNA synthetase family. Homodimer.

Its subcellular location is the cytoplasm. The catalysed reaction is tRNA(His) + L-histidine + ATP = L-histidyl-tRNA(His) + AMP + diphosphate + H(+). In Prochlorococcus marinus (strain MIT 9303), this protein is Histidine--tRNA ligase.